A 423-amino-acid polypeptide reads, in one-letter code: Acetylornithine aminotransferase, mitochondrial (423 aa).

Residues 1–13 constitute a mitochondrion transit peptide; sequence MFKRYLSSTSSRR. N6-(pyridoxal phosphate)lysine is present on lysine 276.

It belongs to the class-III pyridoxal-phosphate-dependent aminotransferase family. Pyridoxal 5'-phosphate serves as cofactor.

It is found in the mitochondrion matrix. It catalyses the reaction N(2)-acetyl-L-ornithine + 2-oxoglutarate = N-acetyl-L-glutamate 5-semialdehyde + L-glutamate. Its pathway is amino-acid biosynthesis; L-arginine biosynthesis; N(2)-acetyl-L-ornithine from L-glutamate: step 4/4. Catalyzes the conversion of N-acetylglutamate-gamma-semialdehyde (NAGSA) to N-acetylornithine in arginine biosynthesis. The chain is Acetylornithine aminotransferase, mitochondrial (ARG8) from Saccharomyces cerevisiae (strain ATCC 204508 / S288c) (Baker's yeast).